Consider the following 1161-residue polypeptide: Nardilysin (1161 aa).

The signal sequence occupies residues 1–18 (MLRRVAVAAVCVTGRKLR). Disordered stretches follow at residues 49 to 103 (MPGR…IIKS) and 130 to 218 (VEGK…KKTT). Phosphoserine is present on residues S85, S91, and S93. A compositionally biased stretch (acidic residues) spans 138–209 (TDEEEEEEEE…EENELEELEE (72 aa)). H244 serves as a coordination point for Zn(2+). E247 serves as the catalytic Proton acceptor. 2 residues coordinate Zn(2+): H248 and E325.

This sequence belongs to the peptidase M16 family. Interacts with BACE1 and NRG1. It depends on Zn(2+) as a cofactor. In terms of tissue distribution, highly expressed in brain of early postnatal mice but expressed at a lower level in the brains of adult mice. Expression is high in cortical neurons, and lower in neurons in the striatum. Very low expression detected in the corpus callosum. Also expressed in the gray matter in spinal cord and dorsal root ganglia.

Its subcellular location is the mitochondrion. It localises to the cell projection. It is found in the dendrite. It catalyses the reaction Hydrolysis of polypeptides, preferably at -Xaa-|-Arg-Lys-, and less commonly at -Arg-|-Arg-Xaa-, in which Xaa is not Arg or Lys.. Its function is as follows. Cleaves peptide substrates on the N-terminus of arginine residues in dibasic pairs. Is a critical activator of BACE1- and ADAM17-mediated pro-neuregulin ectodomain shedding, involved in the positive regulation of axonal maturation and myelination. Required for proper functioning of 2-oxoglutarate dehydrogenase (OGDH). This Mus musculus (Mouse) protein is Nardilysin.